Here is a 384-residue protein sequence, read N- to C-terminus: Chaperone protein DnaJ (384 aa).

The J domain maps to 5–70 (DFYEVLGVSK…DKKAAYDRYG (66 aa)). Residues 143-221 (GAQKTITVPG…CHGSGRIEKE (79 aa)) form a CR-type zinc finger. Positions 156, 159, 173, 176, 195, 198, 209, and 212 each coordinate Zn(2+). CXXCXGXG motif repeat units lie at residues 156 to 163 (CGSCNGTG), 173 to 180 (CPTCSGLG), 195 to 202 (CPTCGGQG), and 209 to 216 (CRVCHGSG).

It belongs to the DnaJ family. In terms of assembly, homodimer. Zn(2+) serves as cofactor.

The protein resides in the cytoplasm. Functionally, participates actively in the response to hyperosmotic and heat shock by preventing the aggregation of stress-denatured proteins and by disaggregating proteins, also in an autonomous, DnaK-independent fashion. Unfolded proteins bind initially to DnaJ; upon interaction with the DnaJ-bound protein, DnaK hydrolyzes its bound ATP, resulting in the formation of a stable complex. GrpE releases ADP from DnaK; ATP binding to DnaK triggers the release of the substrate protein, thus completing the reaction cycle. Several rounds of ATP-dependent interactions between DnaJ, DnaK and GrpE are required for fully efficient folding. Also involved, together with DnaK and GrpE, in the DNA replication of plasmids through activation of initiation proteins. This is Chaperone protein DnaJ from Rhodobacter capsulatus (Rhodopseudomonas capsulata).